Consider the following 134-residue polypeptide: Small ribosomal subunit protein uS9c (134 aa).

The disordered stretch occupies residues 105 to 134 (QGYLTRNPLRKERKKYGLKKARKAPQFSKR). Positions 115–134 (KERKKYGLKKARKAPQFSKR) are enriched in basic residues.

It belongs to the universal ribosomal protein uS9 family.

Its subcellular location is the plastid. It localises to the chloroplast. The sequence is that of Small ribosomal subunit protein uS9c (rps9) from Nephroselmis olivacea (Green alga).